Consider the following 218-residue polypeptide: Uracil-DNA glycosylase (218 aa).

The active-site Proton acceptor is the aspartate 59.

It belongs to the uracil-DNA glycosylase (UDG) superfamily. UNG family.

It is found in the cytoplasm. It catalyses the reaction Hydrolyzes single-stranded DNA or mismatched double-stranded DNA and polynucleotides, releasing free uracil.. Excises uracil residues from the DNA which can arise as a result of misincorporation of dUMP residues by DNA polymerase or due to deamination of cytosine. The protein is Uracil-DNA glycosylase of Staphylococcus aureus (strain bovine RF122 / ET3-1).